Consider the following 612-residue polypeptide: Bile salt-activated lipase (612 aa).

An N-terminal signal peptide occupies residues 1-20 (MGRLEVLFLGLTCCLAAACA). A disulfide bridge links C84 with C100. N-linked (GlcNAc...) asparagine glycosylation is present at N207. The active-site Acyl-ester intermediate is S214. Residues C266 and C277 are joined by a disulfide bond. Catalysis depends on charge relay system residues D340 and H455. Positions 553–612 (VGDHTPPEDDSEAAPVPPTDDSQGGPVPPTDDSQTTPVPPTDNSQAGDSVEAQMPGPIGF) are disordered. 4 tandem repeats follow at residues 556–566 (HTPPEDDSEAA), 567–577 (PVPPTDDSQGG), 578–588 (PVPPTDDSQTT), and 589–599 (PVPPTDNSQAG). Positions 556-599 (HTPPEDDSEAAPVPPTDDSQGGPVPPTDDSQTTPVPPTDNSQAG) are 4 X 11 AA tandem repeats, O-glycosylated region. A compositionally biased stretch (polar residues) spans 583-599 (DDSQTTPVPPTDNSQAG).

It belongs to the type-B carboxylesterase/lipase family. In terms of assembly, interacts with CLC. Synthesized primarily in the pancreas and then transported to the intestine.

It is found in the secreted. It catalyses the reaction a triacylglycerol + H2O = a diacylglycerol + a fatty acid + H(+). The enzyme catalyses 1,2,3-tri-(9Z-octadecenoyl)-glycerol + H2O = di-(9Z)-octadecenoylglycerol + (9Z)-octadecenoate + H(+). The catalysed reaction is 1,2,3-trioctanoylglycerol + H2O = dioctanoylglycerol + octanoate + H(+). It carries out the reaction a sterol ester + H2O = a sterol + a fatty acid + H(+). It catalyses the reaction cholesteryl (9Z-octadecenoate) + H2O = cholesterol + (9Z)-octadecenoate + H(+). The enzyme catalyses an acetyl ester + H2O = an aliphatic alcohol + acetate + H(+). The catalysed reaction is a butanoate ester + H2O = an aliphatic alcohol + butanoate + H(+). It carries out the reaction 9-hexadecanoyloxy-octadecanoate + H2O = 9-hydroxy-octadecanoate + hexadecanoate + H(+). It catalyses the reaction 9-(9Z-octadecenoyloxy)-octadecanoate + H2O = 9-hydroxy-octadecanoate + (9Z)-octadecenoate + H(+). The enzyme catalyses 1-hexadecanoyl-sn-glycero-3-phosphocholine + H2O = sn-glycerol 3-phosphocholine + hexadecanoate + H(+). The catalysed reaction is 12-hexadecanoyloxy-octadecanoate + H2O = 12-hydroxyoctadecanoate + hexadecanoate + H(+). It carries out the reaction 12-(9Z-octadecenoyloxy)-octadecanoate + H2O = 12-hydroxyoctadecanoate + (9Z)-octadecenoate + H(+). It catalyses the reaction 13-(9Z-octadecenoyloxy)-octadecanoate + H2O = 13-hydroxy-octadecanoate + (9Z)-octadecenoate + H(+). The enzyme catalyses 9-(9Z-hexadecenoyloxy)-octadecanoate + H2O = (9Z)-hexadecenoate + 9-hydroxy-octadecanoate + H(+). The catalysed reaction is 12-(9Z-hexadecenoyloxy)-octadecanoate + H2O = 12-hydroxyoctadecanoate + (9Z)-hexadecenoate + H(+). It carries out the reaction 13-(9Z-hexadecenoyloxy)-octadecanoate + H2O = 13-hydroxy-octadecanoate + (9Z)-hexadecenoate + H(+). It catalyses the reaction 12-octadecanoyloxy-octadecanoate + H2O = 12-hydroxyoctadecanoate + octadecanoate + H(+). The enzyme catalyses 13-octadecanoyloxy-octadecanoate + H2O = 13-hydroxy-octadecanoate + octadecanoate + H(+). The catalysed reaction is 5-(9Z-hexadecenoyloxy)-octadecanoate + H2O = 5-hydroxy-octadecanoate + (9Z)-hexadecenoate + H(+). It carries out the reaction 9-octadecanoyloxy-octadecanoate + H2O = 9-hydroxy-octadecanoate + octadecanoate + H(+). With respect to regulation, activated by bile salts such as sodium taurocholate. In terms of biological role, catalyzes the hydrolysis of a wide range of substrates including cholesteryl esters, phospholipids, lysophospholipids, di- and tri-acylglycerols, and fatty acid esters of hydroxy fatty acids (FAHFA). Preferentially hydrolyzes FAHFAs with the ester bond further away from the carboxylate. Unsaturated FAHFAs are hydrolyzed more quickly than saturated FAHFAs. Has an essential role in the complete digestion of dietary lipids and their intestinal absorption, along with the absorption of fat-soluble vitamins. This is Bile salt-activated lipase (Cel) from Rattus norvegicus (Rat).